Reading from the N-terminus, the 251-residue chain is Probable transcriptional regulatory protein MSMEG_2940/MSMEI_2866 (251 aa).

The protein belongs to the TACO1 family.

It localises to the cytoplasm. This chain is Probable transcriptional regulatory protein MSMEG_2940/MSMEI_2866, found in Mycolicibacterium smegmatis (strain ATCC 700084 / mc(2)155) (Mycobacterium smegmatis).